Reading from the N-terminus, the 401-residue chain is Succinyl-diaminopimelate desuccinylase (401 aa).

Residue H82 coordinates Zn(2+). The active site involves D84. Zn(2+) is bound at residue D115. The Proton acceptor role is filled by E149. 3 residues coordinate Zn(2+): E150, E178, and H364.

Belongs to the peptidase M20A family. DapE subfamily. As to quaternary structure, homodimer. Zn(2+) serves as cofactor. It depends on Co(2+) as a cofactor.

It carries out the reaction N-succinyl-(2S,6S)-2,6-diaminopimelate + H2O = (2S,6S)-2,6-diaminopimelate + succinate. Its pathway is amino-acid biosynthesis; L-lysine biosynthesis via DAP pathway; LL-2,6-diaminopimelate from (S)-tetrahydrodipicolinate (succinylase route): step 3/3. In terms of biological role, catalyzes the hydrolysis of N-succinyl-L,L-diaminopimelic acid (SDAP), forming succinate and LL-2,6-diaminopimelate (DAP), an intermediate involved in the bacterial biosynthesis of lysine and meso-diaminopimelic acid, an essential component of bacterial cell walls. The protein is Succinyl-diaminopimelate desuccinylase of Verminephrobacter eiseniae (strain EF01-2).